A 693-amino-acid chain; its full sequence is MAREFSLEKTRNIGIMAHVDAGKTTTTERILYYTGKIHKIGETHEGASQMDWMEQEQERGITITSAATTAQWNNHRVNIIDTPGHVDFTIEVQRSLRVLDGAVTVLDSQSGVEPQTETVWRQATEYGVPRIVFANKMDKIGADFLYSVSTLHDRLQANAHPIQLPIGSEDDFRGIIDLIKMKAEIYTNDLGTDILEEDIPAEYLDQAQEYREKLIEAVAETDEELMMKYLEGEEITNEELKAGIRKATINVEFFPVLCGSAFKNKGVQLMLDAVIDYLPSPLDIPAIKGINPDTDAEEIRPASDEEPFAALAFKIMTDPFVGRLTFFRVYSGVLQSGSYVLNTSKGKRERIGRILQMHANSRQEIDTVYSGDIAAAVGLKDTTTGDSLTDEKAKIILESINVPEPVIQLMVEPKSKADQDKMGIALQKLAEEDPTFRVETNVETGETVISGMGELHLDVLVDRMRREFKVEANVGAPQVSYRETFRASTQARGFFKRQSGGKGQFGDVWIEFTPNEEGKGFEFENAIVGGVVPREFIPAVEKGLVESMANGVLAGYPMVDVKAKLYDGSYHDVDSSETAFKIAASLSLKEAAKSAQPAILEPMMLVTITVPEENLGDVMGHVTARRGRVDGMEAHGNSQIVRAYVPLAEMFGYATVLRSASQGRGTFMMVFDHYEDVPKSVQEEIIKKNKGED.

The tr-type G domain maps to 8–282 (EKTRNIGIMA…AVIDYLPSPL (275 aa)). GTP-binding positions include 17 to 24 (AHVDAGKT), 81 to 85 (DTPGH), and 135 to 138 (NKMD).

Belongs to the TRAFAC class translation factor GTPase superfamily. Classic translation factor GTPase family. EF-G/EF-2 subfamily.

The protein resides in the cytoplasm. In terms of biological role, catalyzes the GTP-dependent ribosomal translocation step during translation elongation. During this step, the ribosome changes from the pre-translocational (PRE) to the post-translocational (POST) state as the newly formed A-site-bound peptidyl-tRNA and P-site-bound deacylated tRNA move to the P and E sites, respectively. Catalyzes the coordinated movement of the two tRNA molecules, the mRNA and conformational changes in the ribosome. This is Elongation factor G from Streptococcus pneumoniae serotype 2 (strain D39 / NCTC 7466).